A 335-amino-acid chain; its full sequence is Transmembrane protein 120B-A (335 aa).

The stretch at 1–40 (MSLQKCQEEWSEIEKEFQQLQETHKVYKQKLEELNSLQNL) forms a coiled coil. Transmembrane regions (helical) follow at residues 100–122 (GLYL…AKFA), 130–150 (FKLY…FVLN), 157–177 (VFNF…SILI), 193–213 (VSTF…YQIF), 268–288 (FLLP…ITLF), and 300–320 (QVFV…LTTL).

This sequence belongs to the TMEM120 family.

It is found in the nucleus inner membrane. Its function is as follows. Necessary for efficient adipogenesis. Does not show ion channel activity. The sequence is that of Transmembrane protein 120B-A (tmem120b-a) from Xenopus laevis (African clawed frog).